The chain runs to 507 residues: Congo red hypersensitive protein 1 (507 aa).

A signal peptide spans 1 to 22 (MKVLDLLTVLSASSLLSTFAAA). Residues 34-260 (ASSTASCNPL…KVIVTDYSTG (227 aa)) enclose the GH16 domain. The cysteines at positions 40 and 48 are disulfide-linked. N-linked (GlcNAc...) asparagine glycosylation is present at Asn-117. Glu-134 (nucleophile) is an active-site residue. Glu-138 functions as the Proton donor in the catalytic mechanism. Glu-138 is a chitin binding site. N-linked (GlcNAc...) asparagine glycosylation is found at Asn-177 and Asn-201. The chitin site is built by Trp-219 and Thr-230. Disordered stretches follow at residues 329-368 (SSSASSTVSSSVSSTVSSSSSVSSSSSTSPSSSTATSSKT) and 381-478 (SSFE…TNSV). 2 stretches are compositionally biased toward low complexity: residues 381 to 439 (SSFE…PVQD) and 451 to 477 (TSSTTQISSKYTSTIQSSSSEASSTNS). Asn-482 is lipidated: GPI-anchor amidated asparagine. The propeptide at 483-507 (GADLAQSLPREGKLFSVLVALLALL) is removed in mature form.

This sequence belongs to the glycosyl hydrolase 16 family. CRH1 subfamily. In terms of processing, the GPI-anchor is attached to the protein in the endoplasmic reticulum and serves to target the protein to the cell surface. There, the glucosamine-inositol phospholipid moiety is cleaved off and the GPI-modified mannoprotein is covalently attached via its lipidless GPI glycan remnant to the 1,6-beta-glucan of the outer cell wall layer.

The protein resides in the secreted. The protein localises to the cell wall. It localises to the membrane. The enzyme catalyses Random endo-hydrolysis of N-acetyl-beta-D-glucosaminide (1-&gt;4)-beta-linkages in chitin and chitodextrins.. In terms of biological role, dual chitinase/transglycosylase that plays a role in cell wall architecture. Chitinase and transglycosylase activities are coupled. Required for the polysaccharide cross-linking at the septa and the cell wall. More specifically, transfers chitin to both beta(1-3)- and beta(1-6)glucan in the cell wall. The minimal number of intact hexopyranose units required in the molecule of the acceptor oligosaccharide is two and the effectivity of the acceptor increased with the increasing length of its oligosaccharide chain. The sequence is that of Congo red hypersensitive protein 1 from Saccharomyces cerevisiae (strain ATCC 204508 / S288c) (Baker's yeast).